Consider the following 159-residue polypeptide: Ribonuclease H (159 aa).

Residues 4–145 enclose the RNase H type-1 domain; that stretch reads THKQVNIYTD…CDKLARDAAE (142 aa). Residues D13, E51, D73, and D137 each contribute to the Mg(2+) site.

Belongs to the RNase H family. As to quaternary structure, monomer. Requires Mg(2+) as cofactor.

Its subcellular location is the cytoplasm. The enzyme catalyses Endonucleolytic cleavage to 5'-phosphomonoester.. In terms of biological role, endonuclease that specifically degrades the RNA of RNA-DNA hybrids. This chain is Ribonuclease H, found in Shewanella denitrificans (strain OS217 / ATCC BAA-1090 / DSM 15013).